The primary structure comprises 877 residues: Probable linoleate 9S-lipoxygenase 4 (877 aa).

The region spanning 38 to 165 (GDFHASLLDG…NYQYERVFFA (128 aa)) is the PLAT domain. Positions 168–877 (TYLPSKMPAP…AMGIPNSISI (710 aa)) constitute a Lipoxygenase domain. A disordered region spans residues 229–252 (GSQELPYPRRGRTGRAPTKTDPNT). Residues H528, H533, H719, N723, and I877 each coordinate Fe cation.

This sequence belongs to the lipoxygenase family. It depends on Fe cation as a cofactor.

It carries out the reaction (9Z,12Z)-octadecadienoate + O2 = (9S)-hydroperoxy-(10E,12Z)-octadecadienoate. Its pathway is lipid metabolism; oxylipin biosynthesis. Its function is as follows. Plant lipoxygenase may be involved in a number of diverse aspects of plant physiology including growth and development, pest resistance, and senescence or responses to wounding. Catalyzes the hydroperoxidation of lipids containing a cis,cis-1,4-pentadiene structure. The protein is Probable linoleate 9S-lipoxygenase 4 of Oryza sativa subsp. japonica (Rice).